The following is a 111-amino-acid chain: Probable 4-amino-4-deoxy-L-arabinose-phosphoundecaprenol flippase subunit ArnE (111 aa).

Topologically, residues 1-35 are cytoplasmic; that stretch reads MIWLTLVFASLLSVAGQLCQKQATCFVAISKRRKH. Residues 36–56 traverse the membrane as a helical segment; sequence IVLWLGLALACLGLAMVLWLL. The EamA domain maps to 40–109; sequence LGLALACLGL…IIGGIVILGS (70 aa). At 57 to 60 the chain is on the periplasmic side; it reads VLQN. Residues 61 to 81 traverse the membrane as a helical segment; that stretch reads VPVGIAYPMLSLNFVWVTLAA. Over 82-87 the chain is Cytoplasmic; sequence VKLWHE. A helical transmembrane segment spans residues 88–108; it reads PVSPRHWCGVAFIIGGIVILG. Topologically, residues 109 to 111 are periplasmic; sequence STV.

It belongs to the ArnE family. In terms of assembly, heterodimer of ArnE and ArnF.

The protein resides in the cell inner membrane. Its pathway is bacterial outer membrane biogenesis; lipopolysaccharide biosynthesis. Functionally, translocates 4-amino-4-deoxy-L-arabinose-phosphoundecaprenol (alpha-L-Ara4N-phosphoundecaprenol) from the cytoplasmic to the periplasmic side of the inner membrane. The protein is Probable 4-amino-4-deoxy-L-arabinose-phosphoundecaprenol flippase subunit ArnE of Escherichia coli O157:H7.